The sequence spans 458 residues: MSQGKIVQIIGAVIDVEFPRDSIPRVYDALKVESTGLTLEVQQQLGDGVVRCIAMGSSDGLKRGLPVTNTGAAISVPVGTATLGRIMDVLGTPIDELGPVATEERMPIHRAAPKFDELSASSELLETGIKVIDLLCPFAKGGKVGLFGGAGVGKTVNMMELIRNIAIEHSGFSVFTGVGERTREGNDFYHEMKESNVLDKVALVYGQMNEPPGNRLRVALTGLTMAEKFRDEGRDVLLFVDNIYRYTLAGTEVSALLGRMPSAVGYQPTLAEEMGKFQERVASTKTGSITSIQAVYVPADDLTDPSPATTFAHLDATVVLSRDIASLGIYPAVDPLDSTSRQLDPLVVGDEHYSVARGVQMTLQKYKELRDIIAILGMDELSADDKLTVARARKIQRFLSQPFFVAEVFTGSPGKFVSLKDTIKGFKAILSGEYDHLPEQAFYMVGGIEEAVEKAASL.

An ATP-binding site is contributed by 148 to 155 (GGAGVGKT).

This sequence belongs to the ATPase alpha/beta chains family. F-type ATPases have 2 components, CF(1) - the catalytic core - and CF(0) - the membrane proton channel. CF(1) has five subunits: alpha(3), beta(3), gamma(1), delta(1), epsilon(1). CF(0) has three main subunits: a(1), b(2) and c(9-12). The alpha and beta chains form an alternating ring which encloses part of the gamma chain. CF(1) is attached to CF(0) by a central stalk formed by the gamma and epsilon chains, while a peripheral stalk is formed by the delta and b chains.

The protein localises to the cell inner membrane. It carries out the reaction ATP + H2O + 4 H(+)(in) = ADP + phosphate + 5 H(+)(out). Produces ATP from ADP in the presence of a proton gradient across the membrane. The catalytic sites are hosted primarily by the beta subunits. In Laribacter hongkongensis (strain HLHK9), this protein is ATP synthase subunit beta.